The chain runs to 190 residues: Segregation and condensation protein B (190 aa).

Belongs to the ScpB family. Homodimer. Homodimerization may be required to stabilize the binding of ScpA to the Smc head domains. Component of a cohesin-like complex composed of ScpA, ScpB and the Smc homodimer, in which ScpA and ScpB bind to the head domain of Smc. The presence of the three proteins is required for the association of the complex with DNA.

The protein resides in the cytoplasm. Participates in chromosomal partition during cell division. May act via the formation of a condensin-like complex containing Smc and ScpA that pull DNA away from mid-cell into both cell halves. The sequence is that of Segregation and condensation protein B from Bacillus cereus (strain B4264).